Here is a 227-residue protein sequence, read N- to C-terminus: Protein GET1 (227 aa).

Residues 1–3 (MSL) lie on the Lumenal side of the membrane. A helical membrane pass occupies residues 4–23 (LLTVFLIVFVTQLISWIGQN). The Cytoplasmic segment spans residues 24 to 107 (VLLEWAYNLY…SFSTKFNAVI (84 aa)). Positions 72–96 (AKLRRSVDKGLAELEKLNSEIATAK) form a coiled coil. A helical membrane pass occupies residues 108–128 (WALTSGVNLVIGWWYGRKAVF). Over 129-151 (YLPEGWMGPLTWWFSFPFAPRGS) the chain is Lumenal. Residues 152-168 (VSVGVWSFACKRVLLVL) traverse the membrane as a helical segment. Over 169 to 227 (ERMVKELFFAETQAKEVPVGFSPSSSSSSTPNPMSKASSGSPSPRRRTTVTVESEDEKS) the chain is Cytoplasmic. The tract at residues 184 to 227 (EVPVGFSPSSSSSSTPNPMSKASSGSPSPRRRTTVTVESEDEKS) is disordered. The span at 190 to 211 (SPSSSSSSTPNPMSKASSGSPS) shows a compositional bias: low complexity.

Belongs to the WRB/GET1 family. In terms of assembly, interacts with GET3.

It localises to the endoplasmic reticulum membrane. Required for the post-translational delivery of tail-anchored (TA) proteins to the endoplasmic reticulum. Acts as a membrane receptor for soluble GET3, which recognizes and selectively binds the transmembrane domain of TA proteins in the cytosol. The chain is Protein GET1 from Coprinopsis cinerea (strain Okayama-7 / 130 / ATCC MYA-4618 / FGSC 9003) (Inky cap fungus).